The primary structure comprises 115 residues: NADH-ubiquinone oxidoreductase chain 3 (115 aa).

The next 3 helical transmembrane spans lie at 4–24, 55–75, and 86–106; these read FIVM…AFWL, FFLV…LLPL, and ITML…AYEW.

It belongs to the complex I subunit 3 family. As to quaternary structure, core subunit of respiratory chain NADH dehydrogenase (Complex I) which is composed of 45 different subunits. Interacts with TMEM186. Interacts with TMEM242.

It localises to the mitochondrion inner membrane. It carries out the reaction a ubiquinone + NADH + 5 H(+)(in) = a ubiquinol + NAD(+) + 4 H(+)(out). In terms of biological role, core subunit of the mitochondrial membrane respiratory chain NADH dehydrogenase (Complex I) which catalyzes electron transfer from NADH through the respiratory chain, using ubiquinone as an electron acceptor. Essential for the catalytic activity of complex I. The sequence is that of NADH-ubiquinone oxidoreductase chain 3 from Reithrodontomys fulvescens (Fulvous harvest mouse).